A 564-amino-acid polypeptide reads, in one-letter code: Hexose transporter HXT17 (564 aa).

Positions 1 to 12 (MQSSTESDRDIQ) are enriched in basic and acidic residues. A disordered region spans residues 1–22 (MQSSTESDRDIQDGPDADIHVA). The Cytoplasmic segment spans residues 1 to 52 (MQSSTESDRDIQDGPDADIHVAPPVEKEWSDGFDDNEVINGDNVEPPKRGLI). Residues 53–73 (GYLVIYLLCYPISFGGFLPGW) traverse the membrane as a helical segment. The Extracellular portion of the chain corresponds to 74 to 109 (DSGITAGFINMDNFKMNFGSYKHSTGEYYLSNVRMG). The helical transmembrane segment at 110–130 (LLVAMFSIGCAIGGLIFARLA) threads the bilayer. At 131-136 (DTLGRR) the chain is on the cytoplasmic side. A helical membrane pass occupies residues 137-157 (LAIVIVVLVYMVGAIIQISSN). Residues 158-167 (HKWYQYFVGK) are Extracellular-facing. Residues 168-188 (IIYGLGAGGCSVLCPMLLSEI) form a helical membrane-spanning segment. The Cytoplasmic portion of the chain corresponds to 189 to 194 (APTDLR). Residues 195 to 215 (GGLVSLYQLNMTFGIFLGYCS) form a helical membrane-spanning segment. Topologically, residues 216–229 (VYGTRKYDNTAQWR) are extracellular. A helical transmembrane segment spans residues 230-250 (VPLGLCFLWTLIIIIGMLLVP). The Cytoplasmic portion of the chain corresponds to 251–333 (ESPRYLIECE…VQTFLQLTGE (83 aa)). The chain crosses the membrane as a helical span at residues 334–350 (NYFFFYGTTIFKSVGLT). The Extracellular segment spans residues 351 to 356 (DGFETS). The helical transmembrane segment at 357-374 (IVLGTVNFFSTIIAVMVV) threads the bilayer. Residues 375 to 381 (DKIGRRK) are Cytoplasmic-facing. The chain crosses the membrane as a helical span at residues 382-402 (CLLFGAAGMMACMVIFASIGV). The Extracellular segment spans residues 403–424 (KCLYPHGQDGPSSKGAGNAMIV). A helical membrane pass occupies residues 425–445 (FTCFYIFCFATTWAPVAYIVV). At 446–462 (AESFPSKVKSRAMSIST) the chain is on the cytoplasmic side. Residues 463 to 483 (ACNWLWQFLIGFFTPFITGSI) form a helical membrane-spanning segment. Residue H484 is a topological domain, extracellular. The helical transmembrane segment at 485-505 (FYYGYVFVGCLVAMFLYVFFF) threads the bilayer. Residues 506–564 (LPETIGLSLEEIQLLYEEGIKPWKSASWVPPSRRGIPSEESKTEKKDWKKFLKFSKGSD) lie on the Cytoplasmic side of the membrane.

This sequence belongs to the major facilitator superfamily. Sugar transporter (TC 2.A.1.1) family.

The protein localises to the membrane. Probable glucose transporter. This Saccharomyces cerevisiae (strain ATCC 204508 / S288c) (Baker's yeast) protein is Hexose transporter HXT17 (HXT17).